The chain runs to 1079 residues: Isoleucine--tRNA ligase (1079 aa).

The short motif at 53 to 63 (PFANGLPHYGH) is the 'HIGH' region element. Residues 611 to 615 (KLSKR) carry the 'KMSKS' region motif. Lys-614 contacts ATP.

Belongs to the class-I aminoacyl-tRNA synthetase family. IleS type 2 subfamily. In terms of assembly, monomer. Zn(2+) is required as a cofactor.

The protein resides in the cytoplasm. It carries out the reaction tRNA(Ile) + L-isoleucine + ATP = L-isoleucyl-tRNA(Ile) + AMP + diphosphate. In terms of biological role, catalyzes the attachment of isoleucine to tRNA(Ile). As IleRS can inadvertently accommodate and process structurally similar amino acids such as valine, to avoid such errors it has two additional distinct tRNA(Ile)-dependent editing activities. One activity is designated as 'pretransfer' editing and involves the hydrolysis of activated Val-AMP. The other activity is designated 'posttransfer' editing and involves deacylation of mischarged Val-tRNA(Ile). This chain is Isoleucine--tRNA ligase, found in Rickettsia canadensis (strain McKiel).